Consider the following 196-residue polypeptide: Rac-like GTP-binding protein ARAC5 (196 aa).

Residue 16 to 21 (AVGKTC) participates in GTP binding. Residues 35 to 43 (YVPTVFDNF) carry the Effector region motif. GTP contacts are provided by residues 119-121 (KLD) and 159-161 (SSK). Cys193 is modified (cysteine methyl ester). The S-geranylgeranyl cysteine moiety is linked to residue Cys193. A propeptide spans 194 to 196 (VFL) (removed in mature form).

This sequence belongs to the small GTPase superfamily. Rho family. Interacts with GDI1 and ROPGEF8 homodimer. Binds to SPK1. In terms of tissue distribution, ubiquitous. Preferentially expressed at the tip of root hairs.

The protein localises to the cytoplasm. It is found in the membrane. The protein resides in the cell membrane. Functionally, involved in cell polarity control during the actin-dependent tip growth of root hairs, thus regulating root hair length and root hair initiation. Inactive GDP-bound Rho GTPases reside in the cytosol, are found in a complex with Rho GDP-dissociation inhibitors (Rho GDIs), and are released from the GDI protein in order to translocate to membranes upon activation. This is Rac-like GTP-binding protein ARAC5 from Arabidopsis thaliana (Mouse-ear cress).